Reading from the N-terminus, the 205-residue chain is Holliday junction branch migration complex subunit RuvA (205 aa).

The interval 1 to 64 (MIGKLKGVVD…EDQIRLFGFS (64 aa)) is domain I. The domain II stretch occupies residues 65 to 143 (SAAERDWFRL…GFSASEPLAA (79 aa)). The interval 144 to 152 (QLGGGGVAS) is flexible linker. Positions 153–205 (AQGGAAADAVSALVNLGYGVPQANAAIAAALRGAGEGAKTEVLIRLGLKELAK) are domain III.

This sequence belongs to the RuvA family. Homotetramer. Forms an RuvA(8)-RuvB(12)-Holliday junction (HJ) complex. HJ DNA is sandwiched between 2 RuvA tetramers; dsDNA enters through RuvA and exits via RuvB. An RuvB hexamer assembles on each DNA strand where it exits the tetramer. Each RuvB hexamer is contacted by two RuvA subunits (via domain III) on 2 adjacent RuvB subunits; this complex drives branch migration. In the full resolvosome a probable DNA-RuvA(4)-RuvB(12)-RuvC(2) complex forms which resolves the HJ.

The protein resides in the cytoplasm. Its function is as follows. The RuvA-RuvB-RuvC complex processes Holliday junction (HJ) DNA during genetic recombination and DNA repair, while the RuvA-RuvB complex plays an important role in the rescue of blocked DNA replication forks via replication fork reversal (RFR). RuvA specifically binds to HJ cruciform DNA, conferring on it an open structure. The RuvB hexamer acts as an ATP-dependent pump, pulling dsDNA into and through the RuvAB complex. HJ branch migration allows RuvC to scan DNA until it finds its consensus sequence, where it cleaves and resolves the cruciform DNA. The chain is Holliday junction branch migration complex subunit RuvA from Xanthobacter autotrophicus (strain ATCC BAA-1158 / Py2).